Here is a 242-residue protein sequence, read N- to C-terminus: Ubiquinone biosynthesis O-methyltransferase (242 aa).

Residues R44, G64, D85, and M129 each contribute to the S-adenosyl-L-methionine site.

The protein belongs to the methyltransferase superfamily. UbiG/COQ3 family.

It carries out the reaction a 3-demethylubiquinol + S-adenosyl-L-methionine = a ubiquinol + S-adenosyl-L-homocysteine + H(+). It catalyses the reaction a 3-(all-trans-polyprenyl)benzene-1,2-diol + S-adenosyl-L-methionine = a 2-methoxy-6-(all-trans-polyprenyl)phenol + S-adenosyl-L-homocysteine + H(+). Its pathway is cofactor biosynthesis; ubiquinone biosynthesis. Its function is as follows. O-methyltransferase that catalyzes the 2 O-methylation steps in the ubiquinone biosynthetic pathway. In Citrobacter koseri (strain ATCC BAA-895 / CDC 4225-83 / SGSC4696), this protein is Ubiquinone biosynthesis O-methyltransferase.